The following is a 98-amino-acid chain: Mobilization protein MobS (98 aa).

This protein is essential to promote the specific transfer of the plasmid in the presence of conjugative plasmids. This chain is Mobilization protein MobS (mobS), found in Acidithiobacillus ferridurans.